Here is a 361-residue protein sequence, read N- to C-terminus: MDGLRLRFRRAYPGFELDIDLALPGRGVTALFGHSGSGKSTCLRCIAGLEKAAEGEVTINGETWQDSRRNLFVAPHRRALGYVFQDANLFRHLTVRRNLAFGLKRIAAAERRVELEQACALLGIEHLLERMPERLSGGEQQRVGIARALLTSPRLLLMDEPLASLDLKRKGEILPYLERLHEELDIPVLYVSHSPDEVARLADHLVLLENGKVRASGPIGETLARVDLPLALDDDAGVVIEGTVSDHDPAYGLLTLVLPGSALQMRVAHAPLAPGKRLRFKVQARDVSLNLRDDAQSSILNRLPVRVLELVDTDTAAHVLVRLDAGGNPLLARITRYSRDQLQLRPGQLLWAQIKSVAVLA.

The region spanning 1–235 (MDGLRLRFRR…VDLPLALDDD (235 aa)) is the ABC transporter domain. 33-40 (GHSGSGKS) provides a ligand contact to ATP. Positions 296–361 (QSSILNRLPV…AQIKSVAVLA (66 aa)) constitute a Mop domain.

This sequence belongs to the ABC transporter superfamily. Molybdate importer (TC 3.A.1.8) family. As to quaternary structure, the complex is composed of two ATP-binding proteins (ModC), two transmembrane proteins (ModB) and a solute-binding protein (ModA).

Its subcellular location is the cell inner membrane. The catalysed reaction is molybdate(out) + ATP + H2O = molybdate(in) + ADP + phosphate + H(+). Functionally, part of the ABC transporter complex ModABC involved in molybdenum import. Responsible for energy coupling to the transport system. In Pseudomonas aeruginosa (strain ATCC 15692 / DSM 22644 / CIP 104116 / JCM 14847 / LMG 12228 / 1C / PRS 101 / PAO1), this protein is Molybdenum import ATP-binding protein ModC.